The primary structure comprises 402 residues: Non-structural protein 3 (402 aa).

Positions 334–402 constitute a DRBM domain; sequence PDPLIRLNDC…AKDILDQIGL (69 aa).

Belongs to the rotavirus NSP3 family.

Its subcellular location is the host cytoplasm. In terms of biological role, may play a role in stimulating the translation of viral mRNAs. The sequence is that of Non-structural protein 3 from Sus scrofa (Pig).